The primary structure comprises 774 residues: Beta-xylosidase/alpha-L-arabinofuranosidase 1 (774 aa).

The N-terminal stretch at 1-33 (ANTKNREPKVSSVFLCFSIFYVTVLLNCNHVYG) is a signal peptide. N-linked (GlcNAc...) asparagine glycans are attached at residues Asn48 and Asn136. Residue Asp303 is part of the active site. 2 N-linked (GlcNAc...) asparagine glycosylation sites follow: Asn437 and Asn530.

This sequence belongs to the glycoside hydrolase 3 family. Post-translationally, proteolytically cleaved in roots to form a 65 kDa protein.

The protein resides in the secreted. It localises to the extracellular space. Its subcellular location is the extracellular matrix. The catalysed reaction is Hydrolysis of (1-&gt;4)-beta-D-xylans, to remove successive D-xylose residues from the non-reducing termini.. It carries out the reaction Hydrolysis of terminal non-reducing alpha-L-arabinofuranoside residues in alpha-L-arabinosides.. Its function is as follows. A bifunctional beta-xylosidase/alpha-L-arabinosidase, exo-enzyme that acts synergistically with endohydrolases. Releases xylose and arabinose from cell walls. Does not cleave xylan from oat spelts although xylan from oat spelts was degraded to xylose when this enzyme was used in combination with xylanase. Also releases xylose and arabinose from aryl glycosides, xylo-oligosaccharides, arabinan from sugar beet and arabino-oligosaccharides, arabinan from sugar beet and arabinoxylan from wheat. The chain is Beta-xylosidase/alpha-L-arabinofuranosidase 1 from Medicago sativa subsp. varia (Alfalfa).